The following is a 115-amino-acid chain: MHEFSICQALITQVEQIAISHGALKVQSVKLRIGSLSGVELPLLEHAYPFASAGTLVEGSTLEIERAPLKVNCEACGLESEVKANLLTCRMCGSCLIRVVSGEELTLMSVELITT.

His-2 lines the Ni(2+) pocket. Zn(2+) is bound by residues Cys-73, Cys-76, Cys-89, and Cys-92.

The protein belongs to the HypA/HybF family.

Functionally, involved in the maturation of [NiFe] hydrogenases. Required for nickel insertion into the metal center of the hydrogenase. This Nitrosospira multiformis (strain ATCC 25196 / NCIMB 11849 / C 71) protein is Hydrogenase maturation factor HypA.